A 323-amino-acid polypeptide reads, in one-letter code: tRNA U34 carboxymethyltransferase (323 aa).

Residues Lys91, Trp105, Lys110, Gly130, Asp152–Thr154, Ile181–Glu182, Met196, Tyr200, and Arg315 contribute to the carboxy-S-adenosyl-L-methionine site.

This sequence belongs to the class I-like SAM-binding methyltransferase superfamily. CmoB family. In terms of assembly, homotetramer.

The enzyme catalyses carboxy-S-adenosyl-L-methionine + 5-hydroxyuridine(34) in tRNA = 5-carboxymethoxyuridine(34) in tRNA + S-adenosyl-L-homocysteine + H(+). Its function is as follows. Catalyzes carboxymethyl transfer from carboxy-S-adenosyl-L-methionine (Cx-SAM) to 5-hydroxyuridine (ho5U) to form 5-carboxymethoxyuridine (cmo5U) at position 34 in tRNAs. The protein is tRNA U34 carboxymethyltransferase of Escherichia fergusonii (strain ATCC 35469 / DSM 13698 / CCUG 18766 / IAM 14443 / JCM 21226 / LMG 7866 / NBRC 102419 / NCTC 12128 / CDC 0568-73).